The primary structure comprises 122 residues: Large ribosomal subunit protein bL12 (122 aa).

Belongs to the bacterial ribosomal protein bL12 family. Homodimer. Part of the ribosomal stalk of the 50S ribosomal subunit. Forms a multimeric L10(L12)X complex, where L10 forms an elongated spine to which 2 to 4 L12 dimers bind in a sequential fashion. Binds GTP-bound translation factors.

Its function is as follows. Forms part of the ribosomal stalk which helps the ribosome interact with GTP-bound translation factors. Is thus essential for accurate translation. This is Large ribosomal subunit protein bL12 from Myxococcus xanthus (strain DK1622).